Reading from the N-terminus, the 457-residue chain is Multidrug resistance protein MdtK (457 aa).

Helical transmembrane passes span 11–31 (LLAL…MGFV), 53–73 (IWLP…PVIA), 93–113 (WLAG…GYII), 127–147 (AVGY…FQVA), 160–180 (GMVM…IFIY), 189–209 (GGVG…LAMV), 243–263 (LPIA…ALLV), 276–296 (IALN…AAVT), 314–334 (AART…IFTV), 350–370 (VVTL…SDSI), 387–407 (IFYI…YILA), and 418–438 (PAGF…MMML).

Belongs to the multi antimicrobial extrusion (MATE) (TC 2.A.66.1) family. MdtK subfamily.

It is found in the cell inner membrane. Multidrug efflux pump that functions probably as a Na(+)/drug antiporter. The chain is Multidrug resistance protein MdtK from Escherichia coli O17:K52:H18 (strain UMN026 / ExPEC).